A 389-amino-acid chain; its full sequence is MSTRHTQRTGGRISVRRNEARLAHARARARFDWLLLARGRPSKLYGYASRHRGELIHLPWPPCWCLELHHDPYRDARSATVWGHRWGWPATHVRPRCVQDCALDSCLYVCCGYGEKLQPVGFVKSYVTNSQLDTLRVLLVGKDGAVYVHHMRAARLCRLASSTTEFTRRGLQRDAVTYEEDLELPDQRMCGTNARHLFDVIAAAADEHNLLTVGGLCQTHAGVSCNLLETVGDPWTAVPAARMTLTVPQVQYRLWPEARRDLRRHLYAGHPLGPWLVCGVLSRERETQKPSPPIRTTVGNVPTPGPREVEIAWVVLTLAGPLLAFWPDTGKICRLANSFSTLWKMGPRAMRGHWTYSAPGRHLPGDAWPLCEHVRPQVGKLPRKRAYLD.

The protein belongs to the Roseolovirus DR6 family.

The protein localises to the host nucleus. Inhibits the host G2/M cell-cycle progression in a p53-independent manner. The protein is G2/M cell-cycle inhibitor DR6 (DR6L) of Homo sapiens (Human).